A 355-amino-acid polypeptide reads, in one-letter code: Methylthioribose-1-phosphate isomerase (355 aa).

Substrate-binding positions include 52–54, R95, and Q204; that span reads RGA. D245 acts as the Proton donor in catalysis. 255 to 256 provides a ligand contact to substrate; that stretch reads NK.

This sequence belongs to the eIF-2B alpha/beta/delta subunits family. MtnA subfamily.

It catalyses the reaction 5-(methylsulfanyl)-alpha-D-ribose 1-phosphate = 5-(methylsulfanyl)-D-ribulose 1-phosphate. It participates in amino-acid biosynthesis; L-methionine biosynthesis via salvage pathway; L-methionine from S-methyl-5-thio-alpha-D-ribose 1-phosphate: step 1/6. Functionally, catalyzes the interconversion of methylthioribose-1-phosphate (MTR-1-P) into methylthioribulose-1-phosphate (MTRu-1-P). The sequence is that of Methylthioribose-1-phosphate isomerase from Acaryochloris marina (strain MBIC 11017).